Reading from the N-terminus, the 240-residue chain is Ubiquinone biosynthesis O-methyltransferase (240 aa).

Positions 44, 64, 85, and 129 each coordinate S-adenosyl-L-methionine.

It belongs to the methyltransferase superfamily. UbiG/COQ3 family.

It catalyses the reaction a 3-demethylubiquinol + S-adenosyl-L-methionine = a ubiquinol + S-adenosyl-L-homocysteine + H(+). The catalysed reaction is a 3-(all-trans-polyprenyl)benzene-1,2-diol + S-adenosyl-L-methionine = a 2-methoxy-6-(all-trans-polyprenyl)phenol + S-adenosyl-L-homocysteine + H(+). It functions in the pathway cofactor biosynthesis; ubiquinone biosynthesis. In terms of biological role, O-methyltransferase that catalyzes the 2 O-methylation steps in the ubiquinone biosynthetic pathway. The sequence is that of Ubiquinone biosynthesis O-methyltransferase from Escherichia coli (strain UTI89 / UPEC).